Consider the following 528-residue polypeptide: MKGGETMSVRRSGYKAVVDGVGGRRRREDDMVEIRKAKREESLLKKRREALPHSPSADSLDQKLISCIWSDERDLLIEATTQIRTLLCGEMFNVRVEEVIQAGLVPRFVEFLTWDDSPQLQFEAAWALTNIASGTSENTEVVIDHGAVAILVRLLNSPYDVVREQVVWALGNISGDSPRCRDIVLGHAALPSLLLQLNHGAKLSMLVNAAWTLSNLCRGKPQPPFDQVSAALPALAQLIRLDDKELLAYTCWALVYLSDGSNEKIQAVIEANVCARLIGLSIHRSPSVITPALRTIGNIVTGNDSQTQHIIDLQALPCLVNLLRGSYNKTIRKEACWTVSNITAGCQSQIQAVFDADICPALVNLLQNSEGDVKKEAAWAICNAIAGGSYKQIMFLVKQECIKPLCDLLTCSDTQLVMVCLEALKKILKVGEVFSSRHAEGIYQCPQTNVNPHAQLIEEAEGLEKIEGLQSHENNDIYETAVKILETYWMEEEEEEDQEQQDMIYFPVDNFANMPTSSGTLSEMHCGP.

An IBB domain is found at 1–56 (MKGGETMSVRRSGYKAVVDGVGGRRRREDDMVEIRKAKREESLLKKRREALPHSPS). ARM repeat units follow at residues 93–133 (NVRV…NIAS), 136–175 (SENTEVVIDHGAVAILVRLLNSPYDVVREQVVWALGNISG), 178–218 (PRCR…NLCR), 220–259 (KPQPPFDQVSAALPALAQLIRLDDKELLAYTCWALVYLSD), 262–301 (NEKIQAVIEANVCARLIGLSIHRSPSVITPALRTIGNIVT), 304–344 (DSQT…NITA), 347–386 (QSQIQAVFDADICPALVNLLQNSEGDVKKEAAWAICNAIA), and 390–429 (YKQIMFLVKQECIKPLCDLLTCSDTQLVMVCLEALKKILK).

It belongs to the importin alpha family. Forms a complex with importin subunit beta-1.

It is found in the nucleus envelope. Binds to conventional NLS motifs and mediates nuclear protein import across the nuclear envelope. Acts as a cellular receptor for the nuclear import of the virD2 protein of Agrobacterium, but is not essential for Agrobacterium-mediated root transformation. In Arabidopsis thaliana (Mouse-ear cress), this protein is Importin subunit alpha-7.